A 303-amino-acid polypeptide reads, in one-letter code: DDRGK domain-containing protein 1 (303 aa).

The Lumenal portion of the chain corresponds to 1–2; it reads MD. A helical membrane pass occupies residues 3–23; the sequence is LILLIGIATALLIILLTLYFL. The Cytoplasmic segment spans residues 24–303; it reads QKRNAPAETK…TPVTASEGGA (280 aa). Disordered regions lie at residues 31–53 and 84–160; these read ETKAAAQPQRGVPLRAQEGVPRR and AIDP…AEVE. Over residues 106–160 the composition is skewed to basic and acidic residues; sequence LDEKMGAKKRAKMEAKEQKRLQREQELHDREQRKVKEAKEEAERKQQDDLDAEVE.

It belongs to the DDRGK1 family. In terms of assembly, interacts with Atg9; the interaction is transient.

Its subcellular location is the endoplasmic reticulum membrane. Its function is as follows. Substrate adapter for ufmylation, the covalent attachment of the ubiquitin-like modifier UFM1 to substrate proteins. Required for ufmylation of Atg9; protects the nervous system during aging, possibly by stabilizing Atg9 and supporting its function. This chain is DDRGK domain-containing protein 1, found in Drosophila grimshawi (Hawaiian fruit fly).